Consider the following 415-residue polypeptide: Methylmalonic aciduria type A homolog, mitochondrial (415 aa).

The N-terminal 62 residues, 1-62 (MTISTLLLSP…LLSDGFRRTL (62 aa)), are a transit peptide targeting the mitochondrion. Residues 147–155 (GPPGAGKST), aspartate 289, and 325–327 (SAR) each bind GTP.

This sequence belongs to the SIMIBI class G3E GTPase family. ArgK/MeaB subfamily. As to quaternary structure, homodimer. Interacts with MMUT (the apoenzyme form); the interaction is GTP dependent.

The protein localises to the mitochondrion. The protein resides in the cytoplasm. It carries out the reaction GTP + H2O = GDP + phosphate + H(+). Its activity is regulated as follows. GTPase activity is stimulated by MMUT. Its function is as follows. GTPase, binds and hydrolyzes GTP. Involved in intracellular vitamin B12 metabolism, mediates the transport of cobalamin (Cbl) into mitochondria for the final steps of adenosylcobalamin (AdoCbl) synthesis. Functions as a G-protein chaperone that assists AdoCbl cofactor delivery from MMAB to the methylmalonyl-CoA mutase (MMUT). Plays a dual role as both a protectase and a reactivase for MMUT. Protects MMUT from progressive inactivation by oxidation by decreasing the rate of the formation of the oxidized inactive cofactor hydroxocobalamin (OH2Cbl). Additionally acts a reactivase by promoting the replacement of OH2Cbl by the active cofactor AdoCbl, restoring the activity of MMUT in the presence and hydrolysis of GTP. This Mus musculus (Mouse) protein is Methylmalonic aciduria type A homolog, mitochondrial.